A 130-amino-acid polypeptide reads, in one-letter code: Large ribosomal subunit protein bL20 (130 aa).

This sequence belongs to the bacterial ribosomal protein bL20 family.

In terms of biological role, binds directly to 23S ribosomal RNA and is necessary for the in vitro assembly process of the 50S ribosomal subunit. It is not involved in the protein synthesizing functions of that subunit. This Solibacter usitatus (strain Ellin6076) protein is Large ribosomal subunit protein bL20.